A 110-amino-acid polypeptide reads, in one-letter code: Large ribosomal subunit protein uL22 (110 aa).

The protein belongs to the universal ribosomal protein uL22 family. Part of the 50S ribosomal subunit.

Its function is as follows. This protein binds specifically to 23S rRNA; its binding is stimulated by other ribosomal proteins, e.g. L4, L17, and L20. It is important during the early stages of 50S assembly. It makes multiple contacts with different domains of the 23S rRNA in the assembled 50S subunit and ribosome. Functionally, the globular domain of the protein is located near the polypeptide exit tunnel on the outside of the subunit, while an extended beta-hairpin is found that lines the wall of the exit tunnel in the center of the 70S ribosome. The sequence is that of Large ribosomal subunit protein uL22 from Aggregatibacter actinomycetemcomitans (Actinobacillus actinomycetemcomitans).